Here is a 429-residue protein sequence, read N- to C-terminus: Serine--tRNA ligase (429 aa).

Residue 228–230 coordinates L-serine; that stretch reads TSE. 259 to 261 provides a ligand contact to ATP; the sequence is RAE. Glu-282 is a binding site for L-serine. 346–349 provides a ligand contact to ATP; sequence EISS. Ser-384 contacts L-serine.

Belongs to the class-II aminoacyl-tRNA synthetase family. Type-1 seryl-tRNA synthetase subfamily. Homodimer. The tRNA molecule binds across the dimer.

The protein resides in the cytoplasm. It catalyses the reaction tRNA(Ser) + L-serine + ATP = L-seryl-tRNA(Ser) + AMP + diphosphate + H(+). The catalysed reaction is tRNA(Sec) + L-serine + ATP = L-seryl-tRNA(Sec) + AMP + diphosphate + H(+). It participates in aminoacyl-tRNA biosynthesis; selenocysteinyl-tRNA(Sec) biosynthesis; L-seryl-tRNA(Sec) from L-serine and tRNA(Sec): step 1/1. Catalyzes the attachment of serine to tRNA(Ser). Is also able to aminoacylate tRNA(Sec) with serine, to form the misacylated tRNA L-seryl-tRNA(Sec), which will be further converted into selenocysteinyl-tRNA(Sec). The sequence is that of Serine--tRNA ligase from Anaplasma marginale (strain St. Maries).